A 222-amino-acid polypeptide reads, in one-letter code: Hexitol phosphatase B (222 aa).

D13 (nucleophile) is an active-site residue. The a divalent metal cation site is built by D13 and D15. Substrate-binding positions include 13–15, 115–116, and K148; these read DMD and SA. D15 functions as the Proton donor in the catalytic mechanism. A divalent metal cation is bound at residue D173.

The protein belongs to the HAD-like hydrolase superfamily. CbbY/CbbZ/Gph/YieH family. Mg(2+) serves as cofactor. The cofactor is Mn(2+). Co(2+) is required as a cofactor. Requires Zn(2+) as cofactor.

It catalyses the reaction sugar phosphate + H2O = sugar + phosphate.. The enzyme catalyses 2-deoxy-D-glucose 6-phosphate + H2O = 2-deoxy-D-glucose + phosphate. The catalysed reaction is D-mannitol 1-phosphate + H2O = D-mannitol + phosphate. It carries out the reaction D-sorbitol 6-phosphate + H2O = D-sorbitol + phosphate. Sugar-phosphate phosphohydrolase that catalyzes the dephosphorylation of D-mannitol 1-phosphate and D-sorbitol 6-phosphate. Also catalyzes the dephosphorylation of 2-deoxyglucose 6-phosphate (2dGlu6P); this is a biologically important activity in vivo since it contributes to the elimination of this toxic compound and plays an important role in the resistance of E.coli to 2-deoxyglucose. To a lesser extent, is also able to dephosphorylate mannose 6-phosphate (Man6P), erythrose-4-phosphate, 2-deoxyribose-5-phosphate (2dRib5P), ribose-5-phosphate (Rib5P) and glucose-6-phosphate (Glu6P) in vitro. The chain is Hexitol phosphatase B from Escherichia coli (strain K12).